We begin with the raw amino-acid sequence, 391 residues long: Phosphoglycerate kinase (391 aa).

Residues 21–23 (DLN), R36, 59–62 (HLGR), R113, and R146 each bind substrate. ATP-binding positions include K197, E319, and 345-348 (GGDT).

It belongs to the phosphoglycerate kinase family. In terms of assembly, monomer.

It localises to the cytoplasm. The enzyme catalyses (2R)-3-phosphoglycerate + ATP = (2R)-3-phospho-glyceroyl phosphate + ADP. Its pathway is carbohydrate degradation; glycolysis; pyruvate from D-glyceraldehyde 3-phosphate: step 2/5. This is Phosphoglycerate kinase from Shewanella piezotolerans (strain WP3 / JCM 13877).